The sequence spans 215 residues: 2-phospho-L-lactate guanylyltransferase (215 aa).

The protein belongs to the CofC family. As to quaternary structure, homodimer.

It carries out the reaction (2S)-2-phospholactate + GTP + H(+) = (2S)-lactyl-2-diphospho-5'-guanosine + diphosphate. It participates in cofactor biosynthesis; coenzyme F420 biosynthesis. In terms of biological role, guanylyltransferase that catalyzes the activation of (2S)-2-phospholactate (2-PL) as (2S)-lactyl-2-diphospho-5'-guanosine, via the condensation of 2-PL with GTP. It is involved in the biosynthesis of coenzyme F420, a hydride carrier cofactor. This is 2-phospho-L-lactate guanylyltransferase from Methanoculleus marisnigri (strain ATCC 35101 / DSM 1498 / JR1).